Reading from the N-terminus, the 251-residue chain is L,D-transpeptidase 1 (251 aa).

Positions Met-1–Ala-28 are cleaved as a signal peptide. The 126-residue stretch at Leu-125 to Val-250 folds into the L,D-TPase catalytic domain. Substrate is bound by residues Tyr-190 and Ser-203–Gly-204. His-208 (proton donor/acceptor) is an active-site residue. Cys-226 serves as the catalytic Nucleophile. Asn-228 contacts substrate.

As to quaternary structure, monomer.

It localises to the periplasm. It participates in cell wall biogenesis; peptidoglycan biosynthesis. Its activity is regulated as follows. Is irreversibly inactivated by the beta-lactams carbapenems via the formation of a covalent adduct resulting from acylation of the catalytic Cys. Functionally, generates 3-&gt;3 cross-links in peptidoglycan, catalyzing the cleavage of the mDap(3)-D-Ala(4) bond of a tetrapeptide donor stem and the formation of a bond between the carbonyl of mDap(3) of the donor stem and the side chain of mDap(3) of the acceptor stem. Is specific for donor substrates containing a stem tetrapeptide since it cannot use pentapeptide stems. The sequence is that of L,D-transpeptidase 1 (ldtA) from Mycobacterium tuberculosis (strain CDC 1551 / Oshkosh).